Consider the following 311-residue polypeptide: Bifunctional protein FolD (311 aa).

174-176 (GKG) contacts NADP(+).

This sequence belongs to the tetrahydrofolate dehydrogenase/cyclohydrolase family. In terms of assembly, homodimer.

The catalysed reaction is (6R)-5,10-methylene-5,6,7,8-tetrahydrofolate + NADP(+) = (6R)-5,10-methenyltetrahydrofolate + NADPH. The enzyme catalyses (6R)-5,10-methenyltetrahydrofolate + H2O = (6R)-10-formyltetrahydrofolate + H(+). The protein operates within one-carbon metabolism; tetrahydrofolate interconversion. Its function is as follows. Catalyzes the oxidation of 5,10-methylenetetrahydrofolate to 5,10-methenyltetrahydrofolate and then the hydrolysis of 5,10-methenyltetrahydrofolate to 10-formyltetrahydrofolate. This chain is Bifunctional protein FolD, found in Pyrobaculum islandicum (strain DSM 4184 / JCM 9189 / GEO3).